Here is a 525-residue protein sequence, read N- to C-terminus: MTENIHKHRILILDFGSQYTQLVARRVRELGVYCELWAWDVTEAQIRDFNPSGIILSGGPESTTEENSPRAPQYVFEAGVPVFGVCYGMQTMAMQLGGHVEASNEREFGYAQVEVVNDSALVRGIEDALTADGKPLLDVWMSHGDKVTAIPSDFVTVASTESCPFAIMANEEKRFYGVQFHPEVTHTRQGMHMLERFVRDICQCEALWTPAKIIDDAVARIREQVGDDKVILGLSGGVDSSVTAMLLHRAIGKNLTCVFVDNGLLRLNEAEQVLDMFGDHFGLNIVHVPAEDRFLSALAGENDPEAKRKIIGRVFVEVFDEEALKLEDVKWLAQGTIYPDVIESAASATGKAHVIKSHHNVGGLPKEMKMGLIEPLKELFKDEVRKIGLELGLPYDMLYRHPFPGPGLGVRVLGEVKKEYCDLLRRADAIFIEELRKADLYNKVSQAFTVFLPVRSVGVMGDGRKYDWVVSLRAVETIDFMTAHWAHLPYDFLGRVSNRIINEVNGISRVVYDISGKPPATIEWE.

Positions 9–207 (RILILDFGSQ…VRDICQCEAL (199 aa)) constitute a Glutamine amidotransferase type-1 domain. Residue Cys86 is the Nucleophile of the active site. Catalysis depends on residues His181 and Glu183. One can recognise a GMPS ATP-PPase domain in the interval 208-400 (WTPAKIIDDA…LGLPYDMLYR (193 aa)). 235 to 241 (SGGVDSS) is an ATP binding site.

As to quaternary structure, homodimer.

The catalysed reaction is XMP + L-glutamine + ATP + H2O = GMP + L-glutamate + AMP + diphosphate + 2 H(+). Its pathway is purine metabolism; GMP biosynthesis; GMP from XMP (L-Gln route): step 1/1. Its function is as follows. Catalyzes the synthesis of GMP from XMP. This is GMP synthase [glutamine-hydrolyzing] from Shigella boydii serotype 18 (strain CDC 3083-94 / BS512).